A 655-amino-acid polypeptide reads, in one-letter code: uncharacterized protein (655 aa).

A helical membrane pass occupies residues 5–25 (IIIIIFIVINFINIIISSITF). Disordered stretches follow at residues 337–363 (NSDYNNNNNNNNNNNNNNNNNNNNNNN) and 484–525 (DKIG…SDNS). Positions 515–524 (DNNSIGSSDN) are enriched in low complexity. Residues 588–608 (ILAVTISAIGIICVALLLTVV) traverse the membrane as a helical segment.

It is found in the membrane. This is an uncharacterized protein from Dictyostelium discoideum (Social amoeba).